A 174-amino-acid polypeptide reads, in one-letter code: Small ribosomal subunit protein uS12m (174 aa).

It belongs to the universal ribosomal protein uS12 family. Component of the mitochondrial small ribosomal subunit (mt-SSU). Mature N.crassa 74S mitochondrial ribosomes consist of a small (37S) and a large (54S) subunit. The 37S small subunit contains a 16S ribosomal RNA (16S mt-rRNA) and 32 different proteins. The 54S large subunit contains a 23S rRNA (23S mt-rRNA) and 42 different proteins. uS12m forms part of the decoding center of the mt-SSU.

It is found in the mitochondrion. In terms of biological role, component of the mitochondrial ribosome (mitoribosome), a dedicated translation machinery responsible for the synthesis of mitochondrial genome-encoded proteins, including at least some of the essential transmembrane subunits of the mitochondrial respiratory chain. The mitoribosomes are attached to the mitochondrial inner membrane and translation products are cotranslationally integrated into the membrane. The chain is Small ribosomal subunit protein uS12m (mrps12) from Neurospora crassa (strain ATCC 24698 / 74-OR23-1A / CBS 708.71 / DSM 1257 / FGSC 987).